Consider the following 587-residue polypeptide: Zinc finger protein 69 (587 aa).

The tract at residues 42–128 (NGTQQESLAD…TPGTTAAGSQ (87 aa)) is disordered. The region spanning 76 to 147 (HDEATPGTPA…VDLSQEEWGQ (72 aa)) is the KRAB domain. 9 consecutive C2H2-type zinc fingers follow at residues 271–293 (HKKK…ILEQ), 299–321 (KPAR…CMRA), 327–349 (NVCE…HTGE), 355–377 (KECG…HTGE), 383–405 (EECG…HTGE), 411–433 (DKCQ…HSGE), 439–461 (SECG…HTGE), 467–489 (TSCC…HTGE), and 495–517 (KECG…HTGV). Residues 564-587 (SRHQKIHRRNTFRDDPGHENKRQL) form a disordered region. Basic and acidic residues predominate over residues 574–587 (TFRDDPGHENKRQL).

This sequence belongs to the krueppel C2H2-type zinc-finger protein family.

It localises to the nucleus. Putative transcription factor that appears to regulate lipid metabolism. This Mus musculus (Mouse) protein is Zinc finger protein 69.